Reading from the N-terminus, the 276-residue chain is NADPH-dependent 7-cyano-7-deazaguanine reductase (276 aa).

Residue 83 to 85 (IES) coordinates substrate. Position 85–86 (85–86 (SK)) interacts with NADPH. The active-site Thioimide intermediate is the Cys-184. Asp-191 acts as the Proton donor in catalysis. 223-224 (HE) contributes to the substrate binding site. 252 to 253 (RG) is an NADPH binding site.

Belongs to the GTP cyclohydrolase I family. QueF type 2 subfamily. In terms of assembly, homodimer.

It localises to the cytoplasm. It carries out the reaction 7-aminomethyl-7-carbaguanine + 2 NADP(+) = 7-cyano-7-deazaguanine + 2 NADPH + 3 H(+). It functions in the pathway tRNA modification; tRNA-queuosine biosynthesis. Catalyzes the NADPH-dependent reduction of 7-cyano-7-deazaguanine (preQ0) to 7-aminomethyl-7-deazaguanine (preQ1). The sequence is that of NADPH-dependent 7-cyano-7-deazaguanine reductase from Pseudomonas paraeruginosa (strain DSM 24068 / PA7) (Pseudomonas aeruginosa (strain PA7)).